A 65-amino-acid chain; its full sequence is uncharacterized protein (65 aa).

The protein localises to the plastid. Its subcellular location is the chloroplast. This is an uncharacterized protein from Porphyra purpurea (Red seaweed).